We begin with the raw amino-acid sequence, 36 residues long: Photosystem II reaction center protein X (36 aa).

A helical membrane pass occupies residues 9 to 29; that stretch reads LWSIFWGGVVVALGAAALTAI.

Belongs to the PsbX family. Type 1 subfamily. As to quaternary structure, PSII is composed of 1 copy each of membrane proteins PsbA, PsbB, PsbC, PsbD, PsbE, PsbF, PsbH, PsbI, PsbJ, PsbK, PsbL, PsbM, PsbT, PsbX, Psb30/Ycf12, peripheral proteins PsbO, CyanoQ (PsbQ), PsbU, PsbV and a large number of cofactors. It forms dimeric complexes.

The protein resides in the cell inner membrane. Involved in the binding and/or turnover of quinones at the Q(B) site of photosystem II (PSII). PSII is a light-driven water plastoquinone oxidoreductase, using light energy to abstract electrons from H(2)O, generating a proton gradient subsequently used for ATP formation. This chain is Photosystem II reaction center protein X, found in Gloeobacter violaceus (strain ATCC 29082 / PCC 7421).